The following is a 188-amino-acid chain: Mitochondrial import inner membrane translocase subunit TIM23-2 (188 aa).

The next 4 membrane-spanning stretches (helical) occupy residues 64-84 (TGTAYLGGSVAGASVGVITGV), 112-131 (GNRIGIIGLVYAGIESGIVA), 138-154 (VWTSVVAGLGTGAVCRA), and 161-178 (AAVAGALGGLAAGAVVAG).

This sequence belongs to the Tim17/Tim22/Tim23 family. In terms of assembly, homomultimer. Component of the TIM17:23 complex at least composed of TIM23, TIM17 and TIM50. The complex interacts with the TIM44 component of the PAM complex. Also part of the NADH-ubiquinone oxidoreductase complex I. Interacts with OEP163, TIM17-2, TIM21, TIM50 and MPPA2. Expressed in roots and young cotyledons. Detected in leaves and flowers.

It localises to the mitochondrion inner membrane. Its function is as follows. Essential component of the TIM17:23 complex, a complex that mediates the translocation of transit peptide-containing proteins across the mitochondrial inner membrane. Links the inner and outer membranes. The sequence is that of Mitochondrial import inner membrane translocase subunit TIM23-2 (TIM23-2) from Arabidopsis thaliana (Mouse-ear cress).